Reading from the N-terminus, the 394-residue chain is Phosphoglycerate kinase (394 aa).

Substrate is bound by residues 21–23, Arg-36, 59–62, Arg-118, and Arg-151; these read DFN and HLGR. The residue at position 183 (Ser-183) is a Phosphoserine. ATP-binding residues include Lys-201 and Gly-292. Thr-299 carries the post-translational modification Phosphothreonine. ATP-binding positions include Glu-323 and 350–353; that span reads GGDS.

The protein belongs to the phosphoglycerate kinase family. As to quaternary structure, monomer.

It localises to the cytoplasm. It catalyses the reaction (2R)-3-phosphoglycerate + ATP = (2R)-3-phospho-glyceroyl phosphate + ADP. Its pathway is carbohydrate degradation; glycolysis; pyruvate from D-glyceraldehyde 3-phosphate: step 2/5. The sequence is that of Phosphoglycerate kinase from Bacillus anthracis (strain A0248).